Reading from the N-terminus, the 484-residue chain is Acetaldehyde dehydrogenase (acetylating) (484 aa).

It belongs to the aldehyde dehydrogenase family.

The enzyme catalyses acetaldehyde + NAD(+) + CoA = acetyl-CoA + NADH + H(+). Its pathway is organosulfur degradation; alkanesulfonate degradation. Its function is as follows. Involved in an anaerobic respiration pathway that converts the sulfonate taurine (2-aminoethanesulfonate) to ammonia, acetate and sulfide. Catalyzes the oxidation of acetaldehyde to acetyl-CoA in the presence of CoASH and NAD(+). Highly prefers NAD(+) over NADP(+). The chain is Acetaldehyde dehydrogenase (acetylating) from Bilophila wadsworthia (strain 3_1_6).